A 611-amino-acid chain; its full sequence is Dihydroxy-acid dehydratase (611 aa).

Position 81 (Asp-81) interacts with Mg(2+). Cys-122 contributes to the [2Fe-2S] cluster binding site. Mg(2+) is bound by residues Asp-123 and Lys-124. Position 124 is an N6-carboxylysine (Lys-124). Residue Cys-195 coordinates [2Fe-2S] cluster. Glu-491 contributes to the Mg(2+) binding site. Ser-517 serves as the catalytic Proton acceptor.

The protein belongs to the IlvD/Edd family. Homodimer. It depends on [2Fe-2S] cluster as a cofactor. Requires Mg(2+) as cofactor.

It catalyses the reaction (2R)-2,3-dihydroxy-3-methylbutanoate = 3-methyl-2-oxobutanoate + H2O. The enzyme catalyses (2R,3R)-2,3-dihydroxy-3-methylpentanoate = (S)-3-methyl-2-oxopentanoate + H2O. It functions in the pathway amino-acid biosynthesis; L-isoleucine biosynthesis; L-isoleucine from 2-oxobutanoate: step 3/4. It participates in amino-acid biosynthesis; L-valine biosynthesis; L-valine from pyruvate: step 3/4. Functions in the biosynthesis of branched-chain amino acids. Catalyzes the dehydration of (2R,3R)-2,3-dihydroxy-3-methylpentanoate (2,3-dihydroxy-3-methylvalerate) into 2-oxo-3-methylpentanoate (2-oxo-3-methylvalerate) and of (2R)-2,3-dihydroxy-3-methylbutanoate (2,3-dihydroxyisovalerate) into 2-oxo-3-methylbutanoate (2-oxoisovalerate), the penultimate precursor to L-isoleucine and L-valine, respectively. The polypeptide is Dihydroxy-acid dehydratase (Brucella canis (strain ATCC 23365 / NCTC 10854 / RM-666)).